Reading from the N-terminus, the 115-residue chain is NADH-ubiquinone oxidoreductase chain 3 (115 aa).

3 helical membrane passes run 3–23, 55–75, and 84–104; these read LFVA…VAFW, FFLV…LLPL, and LSAM…GLIY.

This sequence belongs to the complex I subunit 3 family. Core subunit of respiratory chain NADH dehydrogenase (Complex I) which is composed of 45 different subunits. Interacts with TMEM186. Interacts with TMEM242.

Its subcellular location is the mitochondrion inner membrane. The enzyme catalyses a ubiquinone + NADH + 5 H(+)(in) = a ubiquinol + NAD(+) + 4 H(+)(out). Core subunit of the mitochondrial membrane respiratory chain NADH dehydrogenase (Complex I) which catalyzes electron transfer from NADH through the respiratory chain, using ubiquinone as an electron acceptor. Essential for the catalytic activity of complex I. This is NADH-ubiquinone oxidoreductase chain 3 from Sigmodon hispidus (Hispid cotton rat).